The sequence spans 255 residues: Thiazole synthase (255 aa).

Residue Lys96 is the Schiff-base intermediate with DXP of the active site. 1-deoxy-D-xylulose 5-phosphate is bound by residues Gly157, 183–184 (AG), and 205–206 (NT).

It belongs to the ThiG family. Homotetramer. Forms heterodimers with either ThiH or ThiS.

It is found in the cytoplasm. The enzyme catalyses [ThiS sulfur-carrier protein]-C-terminal-Gly-aminoethanethioate + 2-iminoacetate + 1-deoxy-D-xylulose 5-phosphate = [ThiS sulfur-carrier protein]-C-terminal Gly-Gly + 2-[(2R,5Z)-2-carboxy-4-methylthiazol-5(2H)-ylidene]ethyl phosphate + 2 H2O + H(+). Its pathway is cofactor biosynthesis; thiamine diphosphate biosynthesis. Its function is as follows. Catalyzes the rearrangement of 1-deoxy-D-xylulose 5-phosphate (DXP) to produce the thiazole phosphate moiety of thiamine. Sulfur is provided by the thiocarboxylate moiety of the carrier protein ThiS. In vitro, sulfur can be provided by H(2)S. In Bacillus pumilus (strain SAFR-032), this protein is Thiazole synthase.